A 44-amino-acid chain; its full sequence is Photosystem I reaction center subunit IX (44 aa).

The chain crosses the membrane as a helical span at residues 7 to 27 (YLSVAPVLTTLWFGSLAGLLI).

Belongs to the PsaJ family.

The protein localises to the plastid. It is found in the chloroplast thylakoid membrane. Functionally, may help in the organization of the PsaE and PsaF subunits. The chain is Photosystem I reaction center subunit IX from Drimys granadensis.